The following is a 1087-amino-acid chain: Exportin-7 (1087 aa).

A2 is subject to N-acetylalanine. Residues 30–96 enclose the Importin N-terminal domain; it reads AEKALVEFTN…RNYVLNYLAT (67 aa). At S570 the chain carries Phosphoserine.

Belongs to the exportin family. In terms of assembly, binds to nucleoporins. Found in a complex with XPO7, EIF4A1, ARHGAP1, VPS26A, VPS29, VPS35 and SFN. Interacts with ARHGAP1 and SFN. Interacts with Ran and cargo proteins in a GTP-dependent manner. Highly expressed in testis and spleen, moderate in kidney and liver and low in heart, brain, lung and skeletal muscle.

The protein resides in the cytoplasm. Its subcellular location is the nucleus. Its function is as follows. Mediates the nuclear export of proteins (cargos) with broad substrate specificity. In the nucleus binds cooperatively to its cargo and to the GTPase Ran in its active GTP-bound form. Docking of this trimeric complex to the nuclear pore complex (NPC) is mediated through binding to nucleoporins. Upon transit of a nuclear export complex into the cytoplasm, disassembling of the complex and hydrolysis of Ran-GTP to Ran-GDP (induced by RANBP1 and RANGAP1, respectively) cause release of the cargo from the export receptor. XPO7 then return to the nuclear compartment and mediate another round of transport. The directionality of nuclear export is thought to be conferred by an asymmetric distribution of the GTP- and GDP-bound forms of Ran between the cytoplasm and nucleus. This Mus musculus (Mouse) protein is Exportin-7 (Xpo7).